Here is a 258-residue protein sequence, read N- to C-terminus: Acyl-[acyl-carrier-protein]--UDP-N-acetylglucosamine O-acyltransferase (258 aa).

This sequence belongs to the transferase hexapeptide repeat family. LpxA subfamily. In terms of assembly, homotrimer.

The protein resides in the cytoplasm. The enzyme catalyses a (3R)-hydroxyacyl-[ACP] + UDP-N-acetyl-alpha-D-glucosamine = a UDP-3-O-[(3R)-3-hydroxyacyl]-N-acetyl-alpha-D-glucosamine + holo-[ACP]. The protein operates within glycolipid biosynthesis; lipid IV(A) biosynthesis; lipid IV(A) from (3R)-3-hydroxytetradecanoyl-[acyl-carrier-protein] and UDP-N-acetyl-alpha-D-glucosamine: step 1/6. Functionally, involved in the biosynthesis of lipid A, a phosphorylated glycolipid that anchors the lipopolysaccharide to the outer membrane of the cell. This is Acyl-[acyl-carrier-protein]--UDP-N-acetylglucosamine O-acyltransferase from Neisseria meningitidis serogroup B (strain ATCC BAA-335 / MC58).